A 683-amino-acid polypeptide reads, in one-letter code: Acetyl-coenzyme A synthetase 2 (683 aa).

CoA contacts are provided by residues 207–210 and threonine 326; that span reads RGGK. ATP contacts are provided by residues 402–404, 426–431, aspartate 517, and arginine 532; these read GEP and DTFWQT. Serine 540 provides a ligand contact to CoA. Arginine 543 contacts ATP. Arginine 613 contributes to the CoA binding site.

It belongs to the ATP-dependent AMP-binding enzyme family.

It carries out the reaction acetate + ATP + CoA = acetyl-CoA + AMP + diphosphate. This chain is Acetyl-coenzyme A synthetase 2 (ACS2), found in Candida glabrata (strain ATCC 2001 / BCRC 20586 / JCM 3761 / NBRC 0622 / NRRL Y-65 / CBS 138) (Yeast).